Consider the following 469-residue polypeptide: Putative dipeptidase MW1694 (469 aa).

Position 84 (His-84) interacts with Zn(2+). Asp-86 is a catalytic residue. Asp-115 is a Zn(2+) binding site. Glu-149 (proton acceptor) is an active-site residue. Glu-150, Asp-173, and His-440 together coordinate Zn(2+).

This sequence belongs to the peptidase M20A family. Zn(2+) is required as a cofactor.

This is Putative dipeptidase MW1694 from Staphylococcus aureus (strain MW2).